The following is a 179-amino-acid chain: Protein GrpE (179 aa).

The segment covering 1-10 has biased composition (basic and acidic residues); that stretch reads MSKKEEKQEE. A disordered region spans residues 1–23; sequence MSKKEEKQEELQEEMEAVDAAGV.

This sequence belongs to the GrpE family. Homodimer.

It localises to the cytoplasm. Participates actively in the response to hyperosmotic and heat shock by preventing the aggregation of stress-denatured proteins, in association with DnaK and GrpE. It is the nucleotide exchange factor for DnaK and may function as a thermosensor. Unfolded proteins bind initially to DnaJ; upon interaction with the DnaJ-bound protein, DnaK hydrolyzes its bound ATP, resulting in the formation of a stable complex. GrpE releases ADP from DnaK; ATP binding to DnaK triggers the release of the substrate protein, thus completing the reaction cycle. Several rounds of ATP-dependent interactions between DnaJ, DnaK and GrpE are required for fully efficient folding. The protein is Protein GrpE of Enterococcus faecalis (strain ATCC 700802 / V583).